Here is a 190-residue protein sequence, read N- to C-terminus: Xanthine phosphoribosyltransferase (190 aa).

Positions 20 and 27 each coordinate xanthine. 129 to 133 lines the 5-phospho-alpha-D-ribose 1-diphosphate pocket; that stretch reads ANGAA. Residue lysine 157 coordinates xanthine.

It belongs to the purine/pyrimidine phosphoribosyltransferase family. Xpt subfamily. Homodimer.

The protein localises to the cytoplasm. The catalysed reaction is XMP + diphosphate = xanthine + 5-phospho-alpha-D-ribose 1-diphosphate. It functions in the pathway purine metabolism; XMP biosynthesis via salvage pathway; XMP from xanthine: step 1/1. In terms of biological role, converts the preformed base xanthine, a product of nucleic acid breakdown, to xanthosine 5'-monophosphate (XMP), so it can be reused for RNA or DNA synthesis. In Laribacter hongkongensis (strain HLHK9), this protein is Xanthine phosphoribosyltransferase.